A 314-amino-acid polypeptide reads, in one-letter code: Methenyltetrahydromethanopterin cyclohydrolase (314 aa).

The protein belongs to the MCH family.

The protein localises to the cytoplasm. The catalysed reaction is 5,10-methenyl-5,6,7,8-tetrahydromethanopterin + H2O = N(5)-formyl-5,6,7,8-tetrahydromethanopterin + H(+). It functions in the pathway one-carbon metabolism; methanogenesis from CO(2); 5,10-methenyl-5,6,7,8-tetrahydromethanopterin from CO(2): step 3/3. In terms of biological role, catalyzes the reversible interconversion of 5-formyl-H(4)MPT to methenyl-H(4)MPT(+). The chain is Methenyltetrahydromethanopterin cyclohydrolase from Methanoregula boonei (strain DSM 21154 / JCM 14090 / 6A8).